The chain runs to 491 residues: Ketol-acid reductoisomerase (NADP(+)) (491 aa).

The KARI N-terminal Rossmann domain maps to 15–208 (AQLGKCRFMA…GGHRAGVLES (194 aa)). NADP(+)-binding positions include 45 to 48 (CGAQ), Arg-68, Arg-76, Ser-78, and 108 to 110 (DKQ). The active site involves His-132. Residue Gly-158 participates in NADP(+) binding. 2 consecutive KARI C-terminal knotted domains span residues 209–344 (SFVA…TAPQ) and 345–484 (YEGK…MTDM). Residues Asp-217, Glu-221, Glu-389, and Glu-393 each coordinate Mg(2+). Residue Ser-414 participates in substrate binding.

This sequence belongs to the ketol-acid reductoisomerase family. Mg(2+) is required as a cofactor.

The enzyme catalyses (2R)-2,3-dihydroxy-3-methylbutanoate + NADP(+) = (2S)-2-acetolactate + NADPH + H(+). It carries out the reaction (2R,3R)-2,3-dihydroxy-3-methylpentanoate + NADP(+) = (S)-2-ethyl-2-hydroxy-3-oxobutanoate + NADPH + H(+). The protein operates within amino-acid biosynthesis; L-isoleucine biosynthesis; L-isoleucine from 2-oxobutanoate: step 2/4. It functions in the pathway amino-acid biosynthesis; L-valine biosynthesis; L-valine from pyruvate: step 2/4. Involved in the biosynthesis of branched-chain amino acids (BCAA). Catalyzes an alkyl-migration followed by a ketol-acid reduction of (S)-2-acetolactate (S2AL) to yield (R)-2,3-dihydroxy-isovalerate. In the isomerase reaction, S2AL is rearranged via a Mg-dependent methyl migration to produce 3-hydroxy-3-methyl-2-ketobutyrate (HMKB). In the reductase reaction, this 2-ketoacid undergoes a metal-dependent reduction by NADPH to yield (R)-2,3-dihydroxy-isovalerate. The sequence is that of Ketol-acid reductoisomerase (NADP(+)) from Klebsiella pneumoniae subsp. pneumoniae (strain ATCC 700721 / MGH 78578).